The following is a 1139-amino-acid chain: Retinoblastoma-like protein 2 (1139 aa).

The interval methionine 1 to isoleucine 45 is disordered. Over residues serine 8–alanine 17 the composition is skewed to pro residues. Residues serine 21–aspartate 33 show a composition bias toward acidic residues. Serine 413 carries the phosphoserine modification. The residue at position 417 (threonine 417) is a Phosphothreonine. Residues threonine 417–valine 616 are domain A. A pocket; binds E1A region spans residues threonine 417–tyrosine 1024. The O-linked (GlcNAc) serine glycan is linked to serine 420. Residues proline 617 to serine 827 form a spacer region. Serine 639 carries the post-translational modification Phosphoserine. At threonine 642 the chain carries Phosphothreonine. Residues glycine 654–threonine 678 form a disordered region. Serine 662, serine 672, and serine 688 each carry phosphoserine. The span at isoleucine 810–serine 827 shows a compositional bias: low complexity. 2 disordered regions span residues isoleucine 810–arginine 831 and lysine 933–glutamate 999. Residues asparagine 828–tyrosine 1024 are domain B. Residues serine 941–glutamate 955 are compositionally biased toward polar residues. Serine 948, serine 952, serine 966, serine 971, serine 972, and serine 973 each carry phosphoserine. Residues aspartate 964–serine 973 are compositionally biased toward low complexity. Threonine 974 is subject to Phosphothreonine. The segment covering valine 977–proline 987 has biased composition (pro residues). Residues serine 981 and serine 982 each carry the phosphoserine modification. Residue threonine 986 is modified to Phosphothreonine. Serine 1035, serine 1068, serine 1080, and serine 1112 each carry phosphoserine.

This sequence belongs to the retinoblastoma protein (RB) family. Interacts with AATF. Interacts with KMT5B, KMT5C and USP4. Component of the DREAM complex (also named LINC complex) at least composed of E2F4, E2F5, LIN9, LIN37, LIN52, LIN54, MYBL1, MYBL2, RBL1, RBL2, RBBP4, TFDP1 and TFDP2. The complex exists in quiescent cells where it represses cell cycle-dependent genes. It dissociates in S phase when LIN9, LIN37, LIN52 and LIN54 form a subcomplex that binds to MYBL2. Interacts with RINT1. Interacts with PML (isoform PML-1, isoform PML-2, isoform PML-3, isoform PML-4 and isoform PML-5). Interacts with RBBP9. Interacts with CD53. As to quaternary structure, (Microbial infection) Interacts with JC virus small t antigen. During G0 and early G1 phase of the cell cycle, phosphorylated on Ser-639 and on 5 sites within the domain B. Phosphorylation on Ser-672 in G1 leads to its ubiquitin-dependent proteolysis.

The protein resides in the nucleus. In terms of biological role, key regulator of entry into cell division. Directly involved in heterochromatin formation by maintaining overall chromatin structure and, in particular, that of constitutive heterochromatin by stabilizing histone methylation. Recruits and targets histone methyltransferases KMT5B and KMT5C, leading to epigenetic transcriptional repression. Controls histone H4 'Lys-20' trimethylation. Probably acts as a transcription repressor by recruiting chromatin-modifying enzymes to promoters. Potent inhibitor of E2F-mediated trans-activation, associates preferentially with E2F5. Binds to cyclins A and E. Binds to and may be involved in the transforming capacity of the adenovirus E1A protein. May act as a tumor suppressor. The polypeptide is Retinoblastoma-like protein 2 (RBL2) (Homo sapiens (Human)).